A 510-amino-acid polypeptide reads, in one-letter code: Lysine--tRNA ligase (510 aa).

Residues Glu420 and Glu427 each contribute to the Mg(2+) site.

The protein belongs to the class-II aminoacyl-tRNA synthetase family. In terms of assembly, homodimer. Mg(2+) is required as a cofactor.

Its subcellular location is the cytoplasm. It carries out the reaction tRNA(Lys) + L-lysine + ATP = L-lysyl-tRNA(Lys) + AMP + diphosphate. The polypeptide is Lysine--tRNA ligase (Psychrobacter sp. (strain PRwf-1)).